A 606-amino-acid chain; its full sequence is Threonine--tRNA ligase (606 aa).

The tract at residues 212-503 (DHRKLGVEMK…LLEHTAGELP (292 aa)) is catalytic. Zn(2+) is bound by residues cysteine 304, histidine 355, and histidine 480.

Belongs to the class-II aminoacyl-tRNA synthetase family. Homodimer. Zn(2+) serves as cofactor.

The protein resides in the cytoplasm. It catalyses the reaction tRNA(Thr) + L-threonine + ATP = L-threonyl-tRNA(Thr) + AMP + diphosphate + H(+). Catalyzes the attachment of threonine to tRNA(Thr) in a two-step reaction: L-threonine is first activated by ATP to form Thr-AMP and then transferred to the acceptor end of tRNA(Thr). Also edits incorrectly charged L-seryl-tRNA(Thr). This Campylobacter concisus (strain 13826) protein is Threonine--tRNA ligase.